A 298-amino-acid chain; its full sequence is NAD-dependent L-serine dehydrogenase (298 aa).

Residues 2–31 (KQIA…NVFD), 65–66 (LP), Pro66, and Thr96 each bind NAD(+). Lys171 is an active-site residue. Residue Lys246 participates in NAD(+) binding.

The protein belongs to the HIBADH-related family. In terms of assembly, homotetramer, dimer of dimers.

The enzyme catalyses L-serine + NAD(+) = aminoacetaldehyde + CO2 + NADH. The protein operates within amino-acid degradation. Functionally, NAD-dependent L-serine dehydrogenase that catalyzes the oxidation of L-serine and methyl-L-serine and is possibly involved in serine catabolism. Has low activity toward beta-hydroxyisobutyrate. The polypeptide is NAD-dependent L-serine dehydrogenase (Pseudomonas aeruginosa (strain ATCC 15692 / DSM 22644 / CIP 104116 / JCM 14847 / LMG 12228 / 1C / PRS 101 / PAO1)).